The following is a 427-amino-acid chain: Peptidase B (427 aa).

Lysine 195 and aspartate 200 together coordinate Mn(2+). The active site involves lysine 207. 3 residues coordinate Mn(2+): aspartate 218, aspartate 277, and glutamate 279. Arginine 281 is a catalytic residue.

Belongs to the peptidase M17 family. As to quaternary structure, homohexamer. Mn(2+) serves as cofactor.

It is found in the cytoplasm. The enzyme catalyses Release of an N-terminal amino acid, Xaa, from a peptide or arylamide. Xaa is preferably Glu or Asp but may be other amino acids, including Leu, Met, His, Cys and Gln.. Its function is as follows. Probably plays an important role in intracellular peptide degradation. The sequence is that of Peptidase B from Shigella dysenteriae serotype 1 (strain Sd197).